Here is a 631-residue protein sequence, read N- to C-terminus: Extracellular metalloproteinase mep (631 aa).

The first 19 residues, 1-19, serve as a signal peptide directing secretion; that stretch reads MHGLRLVCSIGTLPLVILA. The propeptide occupies 20–241; the sequence is YPAASLHTTS…VHGVVDYVAD (222 aa). 3 N-linked (GlcNAc...) asparagine glycosylation sites follow: asparagine 282, asparagine 332, and asparagine 364. Zn(2+) is bound at residue histidine 425. Residue glutamate 426 is part of the active site. Residue histidine 429 participates in Zn(2+) binding. N-linked (GlcNAc...) asparagine glycosylation is found at asparagine 470 and asparagine 505.

The protein belongs to the peptidase M36 family. Zn(2+) serves as cofactor.

It is found in the secreted. Secreted metalloproteinase that allows assimilation of proteinaceous substrates. In Aspergillus niger (strain ATCC MYA-4892 / CBS 513.88 / FGSC A1513), this protein is Extracellular metalloproteinase mep (mep).